A 471-amino-acid chain; its full sequence is Probable ribonuclease FAU-1 (471 aa).

Belongs to the FAU-1 family.

In terms of biological role, probable RNase involved in rRNA stability through maturation and/or degradation of precursor rRNAs. Preferentially cleaves UA sequences in the 5' precursor region of 5S rRNA. Binds to RNA in loop regions with AU-rich sequences. This is Probable ribonuclease FAU-1 from Thermococcus kodakarensis (strain ATCC BAA-918 / JCM 12380 / KOD1) (Pyrococcus kodakaraensis (strain KOD1)).